We begin with the raw amino-acid sequence, 342 residues long: BAG family molecular chaperone regulator 1 (342 aa).

Positions 1–41 are disordered; that stretch reads MMKMMRNKPTNLPTAGMTNGGRGSGGGGGGGGRESGGRDLE. Residues 8–17 are compositionally biased toward polar residues; that stretch reads KPTNLPTAGM. The span at 18–34 shows a compositional bias: gly residues; sequence TNGGRGSGGGGGGGGRE. A Ubiquitin-like domain is found at 65–141; the sequence is PMIRVRIKYG…MVLIEDPLSQ (77 aa). Positions 160 to 238 constitute a BAG domain; it reads AISDISLEVD…NYVETLDALK (79 aa). Ser-298 is modified (phosphoserine).

Binds to the ATPase domain of HSP70/HSC70 chaperones.

In terms of biological role, co-chaperone that regulates diverse cellular pathways, such as programmed cell death and stress responses. The polypeptide is BAG family molecular chaperone regulator 1 (BAG1) (Arabidopsis thaliana (Mouse-ear cress)).